The following is a 325-amino-acid chain: MSKINLSTMWSSFIKKIAKTILVAIACISLFLTSSPAANAYPFWAQETAPATPREATGRIVCANCHLGAKLTEVEVPQSVLPDTVFKAVVKIPYDTDVQQVLGDGSKGGLNVGAVLMLPEGFKIAPEDRIPQEWQEELADLYFMPYSEEQENVLLFGPMPGDEYQEVVFPILSPDPATDKSIHFGKYAVHAGGNRGRGQVYPAGNKSNNTTYNVSASGKITDITFEEYVGNQITIETPDSETVVDLVPPGPELLVAVGDTVEAGQVITNNPNVGGFGQADTEIVLQDANRVKWLMAFFALVMLAQIMLVLKKKQVEKVQAAEMNF.

A signal peptide spans 1–40; that stretch reads MSKINLSTMWSSFIKKIAKTILVAIACISLFLTSSPAANA. Tyrosine 41, cysteine 62, cysteine 65, and histidine 66 together coordinate heme. The helical transmembrane segment at 291-311 threads the bilayer; the sequence is VKWLMAFFALVMLAQIMLVLK.

This sequence belongs to the cytochrome f family. The 4 large subunits of the cytochrome b6-f complex are cytochrome b6, subunit IV (17 kDa polypeptide, PetD), cytochrome f and the Rieske protein, while the 4 small subunits are PetG, PetL, PetM and PetN. The complex functions as a dimer. Requires heme as cofactor.

Its subcellular location is the cellular thylakoid membrane. Functionally, component of the cytochrome b6-f complex, which mediates electron transfer between photosystem II (PSII) and photosystem I (PSI), cyclic electron flow around PSI, and state transitions. The chain is Cytochrome f from Trichodesmium erythraeum (strain IMS101).